Here is a 37-residue protein sequence, read N- to C-terminus: Photosystem II reaction center protein K (37 aa).

At 1-15 the chain is on the lumenal side; that stretch reads KLPEAYAIFDPLVDV. A helical transmembrane segment spans residues 16–30; sequence LPVIPVLFFALAFVV. The Cytoplasmic segment spans residues 31–37; it reads QAAVGFR.

It belongs to the PsbK family. In terms of assembly, PSII is composed of 1 copy each of membrane proteins PsbA, PsbB, PsbC, PsbD, PsbE, PsbF, PsbH, PsbI, PsbJ, PsbK, PsbL, PsbM, PsbT, PsbX, PsbY, PsbZ, Psb30/Ycf12, peripheral proteins PsbO, CyanoQ (PsbQ), PsbU, PsbV and a large number of cofactors. It forms dimeric complexes. PSII binds multiple chlorophylls, carotenoids and specific lipids. serves as cofactor.

It is found in the cellular thylakoid membrane. In terms of biological role, one of the components of the core complex of photosystem II (PSII). PSII is a light-driven water:plastoquinone oxidoreductase that uses light energy to abstract electrons from H(2)O, generating O(2) and a proton gradient subsequently used for ATP formation. It consists of a core antenna complex that captures photons, and an electron transfer chain that converts photonic excitation into a charge separation. The chain is Photosystem II reaction center protein K from Thermostichus vulcanus (Synechococcus vulcanus).